The sequence spans 418 residues: Tyrosine--tRNA ligase (418 aa).

Residues 42 to 51 (PTSPDLHLGH) carry the 'HIGH' region motif. Residues 226-230 (KMSKS) carry the 'KMSKS' region motif. Lys-229 lines the ATP pocket. The S4 RNA-binding domain maps to 339–400 (VRLVALLTKS…GKRNFIKVRL (62 aa)).

It belongs to the class-I aminoacyl-tRNA synthetase family. TyrS type 2 subfamily. As to quaternary structure, homodimer.

It is found in the cytoplasm. It catalyses the reaction tRNA(Tyr) + L-tyrosine + ATP = L-tyrosyl-tRNA(Tyr) + AMP + diphosphate + H(+). In terms of biological role, catalyzes the attachment of tyrosine to tRNA(Tyr) in a two-step reaction: tyrosine is first activated by ATP to form Tyr-AMP and then transferred to the acceptor end of tRNA(Tyr). This is Tyrosine--tRNA ligase from Xylella fastidiosa (strain Temecula1 / ATCC 700964).